Reading from the N-terminus, the 360-residue chain is Phosphoserine aminotransferase (360 aa).

R41 contacts L-glutamate. The pyridoxal 5'-phosphate site is built by W101, T152, D172, and Q195. K196 carries the post-translational modification N6-(pyridoxal phosphate)lysine. 237-238 (NT) provides a ligand contact to pyridoxal 5'-phosphate.

Belongs to the class-V pyridoxal-phosphate-dependent aminotransferase family. SerC subfamily. In terms of assembly, homodimer. Requires pyridoxal 5'-phosphate as cofactor.

The protein localises to the cytoplasm. The catalysed reaction is O-phospho-L-serine + 2-oxoglutarate = 3-phosphooxypyruvate + L-glutamate. It carries out the reaction 4-(phosphooxy)-L-threonine + 2-oxoglutarate = (R)-3-hydroxy-2-oxo-4-phosphooxybutanoate + L-glutamate. It functions in the pathway amino-acid biosynthesis; L-serine biosynthesis; L-serine from 3-phospho-D-glycerate: step 2/3. The protein operates within cofactor biosynthesis; pyridoxine 5'-phosphate biosynthesis; pyridoxine 5'-phosphate from D-erythrose 4-phosphate: step 3/5. In terms of biological role, catalyzes the reversible conversion of 3-phosphohydroxypyruvate to phosphoserine and of 3-hydroxy-2-oxo-4-phosphonooxybutanoate to phosphohydroxythreonine. This chain is Phosphoserine aminotransferase, found in Burkholderia cenocepacia (strain ATCC BAA-245 / DSM 16553 / LMG 16656 / NCTC 13227 / J2315 / CF5610) (Burkholderia cepacia (strain J2315)).